We begin with the raw amino-acid sequence, 388 residues long: Dauer abnormal formation protein 25 (388 aa).

3 ANK repeats span residues Ser40 to Asp69, Thr74 to Leu103, and Ile107 to Glu137. Cys321, Cys324, Cys333, Cys336, Cys341, Cys345, His353, and Cys357 together coordinate Zn(2+). The MYND-type zinc finger occupies Cys321 to Cys357.

As to expression, expressed in many ciliated sensory neurons.

Its subcellular location is the cell projection. It localises to the cilium. Its function is as follows. May be involved in the trafficking and dendritic transport of signaling proteins, such as the receptor-type guanylate cyclases gcy-12 and daf-11, to the cilia. In ciliated sensory neurons, required for the calcium flux to the cytoplasm in response to onset and removal of a nitric oxide (NO) stimulus and is thereby required for the behavioral avoidance response to NO-producing organisms like P.aeruginosa. The sequence is that of Dauer abnormal formation protein 25 (daf-25) from Caenorhabditis elegans.